A 649-amino-acid polypeptide reads, in one-letter code: 1-deoxy-D-xylulose-5-phosphate synthase (649 aa).

Thiamine diphosphate is bound by residues H74 and 115 to 117 (GHA). D146 serves as a coordination point for Mg(2+). Residues 147–148 (GA), N176, Y292, and E375 contribute to the thiamine diphosphate site. Residue N176 participates in Mg(2+) binding.

The protein belongs to the transketolase family. DXPS subfamily. Homodimer. It depends on Mg(2+) as a cofactor. Requires thiamine diphosphate as cofactor.

It catalyses the reaction D-glyceraldehyde 3-phosphate + pyruvate + H(+) = 1-deoxy-D-xylulose 5-phosphate + CO2. It participates in metabolic intermediate biosynthesis; 1-deoxy-D-xylulose 5-phosphate biosynthesis; 1-deoxy-D-xylulose 5-phosphate from D-glyceraldehyde 3-phosphate and pyruvate: step 1/1. Functionally, catalyzes the acyloin condensation reaction between C atoms 2 and 3 of pyruvate and glyceraldehyde 3-phosphate to yield 1-deoxy-D-xylulose-5-phosphate (DXP). The sequence is that of 1-deoxy-D-xylulose-5-phosphate synthase from Synechococcus sp. (strain JA-3-3Ab) (Cyanobacteria bacterium Yellowstone A-Prime).